The chain runs to 298 residues: ATP synthase gamma chain (298 aa).

The protein belongs to the ATPase gamma chain family. F-type ATPases have 2 components, CF(1) - the catalytic core - and CF(0) - the membrane proton channel. CF(1) has five subunits: alpha(3), beta(3), gamma(1), delta(1), epsilon(1). CF(0) has three main subunits: a, b and c.

It is found in the cell inner membrane. Its function is as follows. Produces ATP from ADP in the presence of a proton gradient across the membrane. The gamma chain is believed to be important in regulating ATPase activity and the flow of protons through the CF(0) complex. The sequence is that of ATP synthase gamma chain from Desulfosudis oleivorans (strain DSM 6200 / JCM 39069 / Hxd3) (Desulfococcus oleovorans).